We begin with the raw amino-acid sequence, 74 residues long: Ubiquitin-like protein FUBI (74 aa).

The protein belongs to the ubiquitin family.

This is Ubiquitin-like protein FUBI (Fau) from Mus spicilegus (Steppe mouse).